Reading from the N-terminus, the 669-residue chain is Filensin (669 aa).

A head region spans residues 1–33; it reads MYRRSYVFQARQERYERAQPAGPAAQPGGTAPG. Position 5 is a phosphoserine (Ser-5). Positions 33–318 constitute an IF rod domain; the sequence is GLAALQALGE…RIIEIEGSRL (286 aa). Positions 34-68 are coil 1A; that stretch reads LAALQALGERVAVQVQRARALQQRHAGLRRQLDAF. Position 35 is an N-acetylalanine (Ala-35). A linker 1 region spans residues 69 to 77; the sequence is QRLGEQPGP. Positions 78-177 are coil 1B; the sequence is EDALARHVEA…RYKKNLLEIQ (100 aa). The interval 178–194 is linker 12; sequence TYITVLQQIVQTAPQVS. The coil 2 stretch occupies residues 195–318; it reads LVTGMRESGL…RIIEIEGSRL (124 aa). The tract at residues 319–669 is tail; sequence SSVFIETPIS…GEKSLPDTRA (351 aa). Ser-339 carries the phosphoserine modification. Disordered stretches follow at residues 380–435, 449–468, and 505–618; these read VEET…GGQI, RVSGHKEPEPEPPTDLFTKG, and HHDG…KALS. Gly residues predominate over residues 408 to 417; it reads SQPGAGGGHG. Gly-432 carries N-myristoyl glycine lipidation. Ser-513 is modified (phosphoserine). Basic and acidic residues predominate over residues 545–570; that stretch reads NGLRAKEPKDLEEKDDDGKKEAEGSR. Over residues 583 to 593 the composition is skewed to polar residues; sequence PSTSHSQTSGS. Residue Thr-585 is modified to Phosphothreonine.

This sequence belongs to the intermediate filament family. In terms of assembly, part of a complex required for lens intermediate filament formation composed of BFSP1, BFSP2 and CRYAA. Identified in a complex that contains VIM, EZR, AHNAK, BFSP1, BFSP2, ANK2, PLEC, PRX and spectrin. Found in a complex composed of PPL (via C-terminal linker domain), BFSP1 and BFSP2 in the retinal lens. Within the complex interacts with BFSP2. Interacts (via C-terminus) with MIP (via C-terminus) in aged lens fiber cells. In terms of processing, proteolytically cleaved during lens cell fiber differentiation with increased fragmentation as fiber cell age increases. Post-translationally, myristoylated at Gly-432 following proteolytic cleavage at Asp-431. Acetylated at Ala-35 following proteolytic cleavage at Leu-34. Detected in eye lens fiber cells (at protein level). Expressed in retinal lens epithelial cells (at protein level).

The protein localises to the cell membrane. It localises to the cytoplasm. Its subcellular location is the cytoskeleton. The protein resides in the cell cortex. Its function is as follows. Required for the correct formation of lens intermediate filaments as part of a complex composed of BFSP1, BFSP2 and CRYAA. Involved in altering the calcium regulation of MIP water permeability. The polypeptide is Filensin (Bfsp1) (Mus musculus (Mouse)).